Here is a 283-residue protein sequence, read N- to C-terminus: 4-diphosphocytidyl-2-C-methyl-D-erythritol kinase (283 aa).

Residue Lys-12 is part of the active site. 94 to 104 (PAQAGLGGGSS) contacts ATP. Asp-136 is a catalytic residue.

The protein belongs to the GHMP kinase family. IspE subfamily.

The catalysed reaction is 4-CDP-2-C-methyl-D-erythritol + ATP = 4-CDP-2-C-methyl-D-erythritol 2-phosphate + ADP + H(+). It participates in isoprenoid biosynthesis; isopentenyl diphosphate biosynthesis via DXP pathway; isopentenyl diphosphate from 1-deoxy-D-xylulose 5-phosphate: step 3/6. In terms of biological role, catalyzes the phosphorylation of the position 2 hydroxy group of 4-diphosphocytidyl-2C-methyl-D-erythritol. In Acidovorax ebreus (strain TPSY) (Diaphorobacter sp. (strain TPSY)), this protein is 4-diphosphocytidyl-2-C-methyl-D-erythritol kinase.